A 393-amino-acid polypeptide reads, in one-letter code: Pyrimidine monooxygenase RutA (393 aa).

FMN is bound by residues 79-80 (IK), N145, E154, 170-171 (RY), and S220.

The protein belongs to the NtaA/SnaA/DszA monooxygenase family. RutA subfamily.

The catalysed reaction is uracil + FMNH2 + NADH + O2 = (Z)-3-ureidoacrylate + FMN + NAD(+) + H2O + H(+). The enzyme catalyses thymine + FMNH2 + NADH + O2 = (Z)-2-methylureidoacrylate + FMN + NAD(+) + H2O + H(+). Functionally, catalyzes the pyrimidine ring opening between N-3 and C-4 by an unusual flavin hydroperoxide-catalyzed mechanism, adding oxygen atoms in the process to yield ureidoacrylate peracid, that immediately reacts with FMN forming ureidoacrylate and FMN-N(5)-oxide. The FMN-N(5)-oxide reacts spontaneously with NADH to produce FMN. Requires the flavin reductase RutF to regenerate FMN in vivo. The polypeptide is Pyrimidine monooxygenase RutA (Escherichia coli O9:H4 (strain HS)).